A 354-amino-acid chain; its full sequence is Dihydroorotate dehydrogenase (quinone) (354 aa).

FMN-binding positions include 67–71 (AGFDK) and Thr-91. Lys-71 serves as a coordination point for substrate. Residue 116–120 (NRMGF) participates in substrate binding. Positions 144 and 177 each coordinate FMN. Asn-177 contacts substrate. Ser-180 serves as the catalytic Nucleophile. Asn-182 contacts substrate. Residues Lys-213 and Thr-241 each contribute to the FMN site. 242 to 243 (NT) lines the substrate pocket. Residues Gly-265, Gly-294, and 315-316 (YT) each bind FMN.

This sequence belongs to the dihydroorotate dehydrogenase family. Type 2 subfamily. Monomer. It depends on FMN as a cofactor.

It localises to the cell membrane. The catalysed reaction is (S)-dihydroorotate + a quinone = orotate + a quinol. It participates in pyrimidine metabolism; UMP biosynthesis via de novo pathway; orotate from (S)-dihydroorotate (quinone route): step 1/1. Catalyzes the conversion of dihydroorotate to orotate with quinone as electron acceptor. This Mycolicibacterium smegmatis (strain ATCC 700084 / mc(2)155) (Mycobacterium smegmatis) protein is Dihydroorotate dehydrogenase (quinone).